We begin with the raw amino-acid sequence, 127 residues long: MHLNMLKSKIHRATVVQADLNYVGSITIDRNLMDKANILEYEKVEIANINNGARFETYVIAGEAGSGIICLNGAAARCAQAGDKVIIMCYCSLTPEEASEHRPKVVFVNDDNSISNVTEYEKHGTIG.

The active-site Schiff-base intermediate with substrate; via pyruvic acid is serine 25. The residue at position 25 (serine 25) is a Pyruvic acid (Ser). A substrate-binding site is contributed by threonine 57. Catalysis depends on tyrosine 58, which acts as the Proton donor. 73–75 (GAA) lines the substrate pocket.

The protein belongs to the PanD family. In terms of assembly, heterooctamer of four alpha and four beta subunits. Requires pyruvate as cofactor. In terms of processing, is synthesized initially as an inactive proenzyme, which is activated by self-cleavage at a specific serine bond to produce a beta-subunit with a hydroxyl group at its C-terminus and an alpha-subunit with a pyruvoyl group at its N-terminus.

It is found in the cytoplasm. The enzyme catalyses L-aspartate + H(+) = beta-alanine + CO2. The protein operates within cofactor biosynthesis; (R)-pantothenate biosynthesis; beta-alanine from L-aspartate: step 1/1. Its function is as follows. Catalyzes the pyruvoyl-dependent decarboxylation of aspartate to produce beta-alanine. This chain is Aspartate 1-decarboxylase, found in Clostridium acetobutylicum (strain ATCC 824 / DSM 792 / JCM 1419 / IAM 19013 / LMG 5710 / NBRC 13948 / NRRL B-527 / VKM B-1787 / 2291 / W).